The sequence spans 190 residues: Small ribosomal subunit protein mS23 (190 aa).

The residue at position 2 (Ala-2) is an N-acetylalanine. An N6-acetyllysine modification is found at Lys-102. Residues 139 to 190 (RTQHGGSHVSRKSEHLSVRPQTALEENETQKEVPQDQHLEAPADQSKGLLPP) are disordered. Residues 166–179 (ETQKEVPQDQHLEA) are compositionally biased toward basic and acidic residues.

Belongs to the mitochondrion-specific ribosomal protein mS23 family. Component of the mitochondrial small ribosomal subunit (mt-SSU). Mature mammalian 55S mitochondrial ribosomes consist of a small (28S) and a large (39S) subunit. The 28S small subunit contains a 12S ribosomal RNA (12S mt-rRNA) and 30 different proteins. The 39S large subunit contains a 16S rRNA (16S mt-rRNA), a copy of mitochondrial valine transfer RNA (mt-tRNA(Val)), which plays an integral structural role, and 52 different proteins.

It localises to the mitochondrion. The protein is Small ribosomal subunit protein mS23 (MRPS23) of Homo sapiens (Human).